The primary structure comprises 443 residues: Threonine/serine transporter TdcC (443 aa).

11 helical membrane passes run 22 to 42 (TTWTLGLFGTAIGAGVLFFPI), 44 to 64 (AGFGGLIPILLMLVLAYPIAF), 97 to 117 (GVVITFLYFFAICPLLWIYGV), 140 to 160 (FVALFLLLLMAFVIWFGKDLM), 163 to 183 (VMSYLVWPFIASLVLISLSLI), 207 to 227 (ILVTVWLGISIMVFSFNFSPI), 259 to 279 (ASMLMVAVVMFFAFSCLFTLS), 319 to 339 (ASIIALVAIFKSFFGHYLGTL), 366 to 386 (ISMIFIMGSTWVVAYANPNIL), 389 to 409 (IEAMGAPIIASLLCLLPMYAI), and 423 to 443 (DNVFVTLIGLLTILNIVYKLF).

It belongs to the amino acid/polyamine transporter 2 family. SdaC/TdcC subfamily.

The protein resides in the cell inner membrane. It catalyses the reaction L-threonine(in) + H(+)(in) = L-threonine(out) + H(+)(out). The enzyme catalyses L-serine(in) + H(+)(in) = L-serine(out) + H(+)(out). In terms of biological role, involved in the import of threonine and serine into the cell, with the concomitant import of a proton (symport system). This Salmonella paratyphi A (strain ATCC 9150 / SARB42) protein is Threonine/serine transporter TdcC.